Consider the following 146-residue polypeptide: Ribonuclease H (146 aa).

Positions 1–143 (MQKKITIYTD…CDELARQAIQ (143 aa)) constitute an RNase H type-1 domain. Residues Asp-10, Glu-48, Asp-70, and Asp-135 each coordinate Mg(2+).

This sequence belongs to the RNase H family. Monomer. It depends on Mg(2+) as a cofactor.

It localises to the cytoplasm. It carries out the reaction Endonucleolytic cleavage to 5'-phosphomonoester.. Its function is as follows. Endonuclease that specifically degrades the RNA of RNA-DNA hybrids. The protein is Ribonuclease H of Chlorobium luteolum (strain DSM 273 / BCRC 81028 / 2530) (Pelodictyon luteolum).